The sequence spans 260 residues: Putative protein phosphatase (260 aa).

A PPM-type phosphatase domain is found at 9–254; it reads FTGLSKKGPV…DNITAALVNL (246 aa).

The enzyme catalyses O-phospho-L-seryl-[protein] + H2O = L-seryl-[protein] + phosphate. The catalysed reaction is O-phospho-L-threonyl-[protein] + H2O = L-threonyl-[protein] + phosphate. This Mycoplasma genitalium (strain ATCC 33530 / DSM 19775 / NCTC 10195 / G37) (Mycoplasmoides genitalium) protein is Putative protein phosphatase.